A 430-amino-acid polypeptide reads, in one-letter code: Aspartate aminotransferase, mitochondrial (430 aa).

The N-terminal 29 residues, 1 to 29, are a transit peptide targeting the mitochondrion; that stretch reads MALLHSGRVLSGMAAAFHPGLAAAASARA. Residue T48 is modified to Phosphothreonine. Residue K59 is modified to N6-acetyllysine. Position 65 (G65) interacts with substrate. K73 is modified (N6-acetyllysine; alternate). An N6-succinyllysine; alternate modification is found at K73. K82 is modified (N6-acetyllysine). K90 bears the N6-acetyllysine; alternate mark. K90 is subject to N6-succinyllysine; alternate. Position 96 is a 3'-nitrotyrosine; alternate (Y96). A Phosphotyrosine; alternate modification is found at Y96. Residues K107 and K122 each carry the N6-acetyllysine; alternate modification. 2 positions are modified to N6-succinyllysine; alternate: K107 and K122. S143 bears the Phosphoserine mark. K159 is subject to N6-acetyllysine; alternate. At K159 the chain carries N6-succinyllysine; alternate. W162 provides a ligand contact to substrate. The residue at position 185 (K185) is an N6-acetyllysine; alternate. The residue at position 185 (K185) is an N6-succinyllysine; alternate. Residue N215 coordinates substrate. K227 carries the N6-succinyllysine modification. K234 bears the N6-acetyllysine mark. K279 and K296 each carry N6-acetyllysine; alternate. K279 is modified (N6-(pyridoxal phosphate)lysine; alternate). Position 296 is an N6-succinyllysine; alternate (K296). At K302 the chain carries N6-acetyllysine. An N6-acetyllysine; alternate modification is found at K309. K309 is subject to N6-succinyllysine; alternate. At R313 the chain carries Asymmetric dimethylarginine. Residue K338 is modified to N6-acetyllysine; alternate. K338 is subject to N6-succinyllysine; alternate. The residue at position 345 (K345) is an N6-acetyllysine. The residue at position 363 (K363) is an N6-acetyllysine; alternate. An N6-succinyllysine; alternate modification is found at K363. K364 and K387 each carry N6-acetyllysine. Residues K396 and K404 each carry the N6-acetyllysine; alternate modification. K396 and K404 each carry N6-succinyllysine; alternate. R407 contacts substrate.

The protein belongs to the class-I pyridoxal-phosphate-dependent aminotransferase family. As to quaternary structure, homodimer. Pyridoxal 5'-phosphate serves as cofactor. As to expression, expressed in all tissues tested: liver, pancreas, kidney, heart, spleen, arterioles, and lymphocytes.

It is found in the mitochondrion matrix. It localises to the cell membrane. The catalysed reaction is L-aspartate + 2-oxoglutarate = oxaloacetate + L-glutamate. It carries out the reaction L-kynurenine + 2-oxoglutarate = kynurenate + L-glutamate + H2O. In terms of biological role, catalyzes the irreversible transamination of the L-tryptophan metabolite L-kynurenine to form kynurenic acid (KA). As a member of the malate-aspartate shuttle, it has a key role in the intracellular NAD(H) redox balance. Is important for metabolite exchange between mitochondria and cytosol, and for amino acid metabolism. Facilitates cellular uptake of long-chain free fatty acids. This chain is Aspartate aminotransferase, mitochondrial (Got2), found in Rattus norvegicus (Rat).